We begin with the raw amino-acid sequence, 476 residues long: Aspartyl/glutamyl-tRNA(Asn/Gln) amidotransferase subunit B 1 (476 aa).

Belongs to the GatB/GatE family. GatB subfamily. In terms of assembly, heterotrimer of A, B and C subunits.

The catalysed reaction is L-glutamyl-tRNA(Gln) + L-glutamine + ATP + H2O = L-glutaminyl-tRNA(Gln) + L-glutamate + ADP + phosphate + H(+). The enzyme catalyses L-aspartyl-tRNA(Asn) + L-glutamine + ATP + H2O = L-asparaginyl-tRNA(Asn) + L-glutamate + ADP + phosphate + 2 H(+). In terms of biological role, allows the formation of correctly charged Asn-tRNA(Asn) or Gln-tRNA(Gln) through the transamidation of misacylated Asp-tRNA(Asn) or Glu-tRNA(Gln) in organisms which lack either or both of asparaginyl-tRNA or glutaminyl-tRNA synthetases. The reaction takes place in the presence of glutamine and ATP through an activated phospho-Asp-tRNA(Asn) or phospho-Glu-tRNA(Gln). This chain is Aspartyl/glutamyl-tRNA(Asn/Gln) amidotransferase subunit B 1 (gatB1), found in Clostridium acetobutylicum (strain ATCC 824 / DSM 792 / JCM 1419 / IAM 19013 / LMG 5710 / NBRC 13948 / NRRL B-527 / VKM B-1787 / 2291 / W).